We begin with the raw amino-acid sequence, 347 residues long: GMP reductase (347 aa).

108-131 contributes to the NADP(+) binding site; it reads DDFTKTRQILAMSSALRFICVDVA. K(+) is bound by residues glycine 181 and glycine 183. The active-site Thioimidate intermediate is the cysteine 186. 216-239 contributes to the NADP(+) binding site; it reads IVGDGGCTCPGDVAKAFGGGADFV.

This sequence belongs to the IMPDH/GMPR family. GuaC type 1 subfamily. Homotetramer.

It catalyses the reaction IMP + NH4(+) + NADP(+) = GMP + NADPH + 2 H(+). Its function is as follows. Catalyzes the irreversible NADPH-dependent deamination of GMP to IMP. It functions in the conversion of nucleobase, nucleoside and nucleotide derivatives of G to A nucleotides, and in maintaining the intracellular balance of A and G nucleotides. This chain is GMP reductase, found in Aeromonas hydrophila subsp. hydrophila (strain ATCC 7966 / DSM 30187 / BCRC 13018 / CCUG 14551 / JCM 1027 / KCTC 2358 / NCIMB 9240 / NCTC 8049).